The chain runs to 490 residues: Transmembrane protease serine 2 (490 aa).

Residues 1-83 (MALNSGSPPG…ALCTSKSKKS (83 aa)) are Cytoplasmic-facing. The helical; Signal-anchor for type II membrane protein transmembrane segment at 84 to 104 (LCLALALGTVLTGAAVAAVLL) threads the bilayer. Residues 105–490 (WRFWDSNCST…WIYQQMRANS (386 aa)) are Extracellular-facing. N111 carries an N-linked (GlcNAc...) asparagine glycan. The 39-residue stretch at 111–149 (NCSTSEMECGSSGTCISSSLWCDGVAHCPNGEDENRCVR) folds into the LDL-receptor class A domain. 9 disulfides stabilise this stretch: C112–C125, C119–C138, C132–C147, C171–C230, C184–C240, C243–C363, C279–C295, C408–C424, and C435–C463. D133, V135, D143, and E144 together coordinate Ca(2+). Residues 150-242 (LYGQSFILQV…RMVVSLRCIE (93 aa)) form the SRCR domain. N212 carries N-linked (GlcNAc...) asparagine glycosylation. In terms of domain architecture, Peptidase S1 spans 254–487 (IVGGLNASPG…FTDWIYQQMR (234 aa)). Residues H294 and D343 each act as charge relay system in the active site. Residue S439 is the Charge relay system of the active site. Residue N474 is glycosylated (N-linked (GlcNAc...) asparagine).

This sequence belongs to the peptidase S1 family. The catalytically active form interacts with ACE2. In terms of processing, proteolytically processed; by an autocatalytic mechanism. Autocleavage induces active conformation. Larynx, trachea and bronchi, lung, prostate and kidney.

It is found in the cell membrane. The protein resides in the secreted. The catalysed reaction is The enzyme cleaves angiotensin-converting enzyme 2 (EC 3.4.17.23) and cleaves influenzea A and B virus and coronavirus spike glycoproteins at arginine residues.. Its function is as follows. Plasma membrane-anchored serine protease that cleaves at arginine residues. Participates in proteolytic cascades of relevance for the normal physiologic function of the prostate. Androgen-induced TMPRSS2 activates several substrates that include pro-hepatocyte growth factor/HGF, the protease activated receptor-2/F2RL1 or matriptase/ST14 leading to extracellular matrix disruption. In addition, activates trigeminal neurons and contribute to both spontaneous pain and mechanical allodynia. In terms of biological role, (Microbial infection) Essential for spread and pathogenesis of influenza A virus (strains H1N1, H3N2 and H7N9) and is involved in proteolytic cleavage and activation of hemagglutinin (HA) protein which is essential for viral infectivity. This Mus musculus (Mouse) protein is Transmembrane protease serine 2 (Tmprss2).